The primary structure comprises 408 residues: Glutamate N-acetyltransferase (408 aa).

Positions 150, 176, 189, 271, 403, and 408 each coordinate substrate. Threonine 189 functions as the Nucleophile in the catalytic mechanism.

The protein belongs to the ArgJ family. As to quaternary structure, heterotetramer of two alpha and two beta chains.

The protein resides in the cytoplasm. It carries out the reaction N(2)-acetyl-L-ornithine + L-glutamate = N-acetyl-L-glutamate + L-ornithine. It functions in the pathway amino-acid biosynthesis; L-arginine biosynthesis; L-ornithine and N-acetyl-L-glutamate from L-glutamate and N(2)-acetyl-L-ornithine (cyclic): step 1/1. Functionally, catalyzes the transfer of the acetyl group from N(2)-acetylornithine to glutamate, forming N-acetylglutamate and L-ornithine. This chain is Glutamate N-acetyltransferase, found in Methanococcus vannielii (strain ATCC 35089 / DSM 1224 / JCM 13029 / OCM 148 / SB).